Here is a 412-residue protein sequence, read N- to C-terminus: Light-independent protochlorophyllide reductase subunit N (412 aa).

The [4Fe-4S] cluster site is built by C17, C42, and C103.

This sequence belongs to the BchN/ChlN family. In terms of assembly, protochlorophyllide reductase is composed of three subunits; ChlL, ChlN and ChlB. Forms a heterotetramer of two ChlB and two ChlN subunits. [4Fe-4S] cluster is required as a cofactor.

The enzyme catalyses chlorophyllide a + oxidized 2[4Fe-4S]-[ferredoxin] + 2 ADP + 2 phosphate = protochlorophyllide a + reduced 2[4Fe-4S]-[ferredoxin] + 2 ATP + 2 H2O. It participates in porphyrin-containing compound metabolism; chlorophyll biosynthesis (light-independent). Its function is as follows. Component of the dark-operative protochlorophyllide reductase (DPOR) that uses Mg-ATP and reduced ferredoxin to reduce ring D of protochlorophyllide (Pchlide) to form chlorophyllide a (Chlide). This reaction is light-independent. The NB-protein (ChlN-ChlB) is the catalytic component of the complex. The sequence is that of Light-independent protochlorophyllide reductase subunit N from Synechococcus sp. (strain CC9902).